The sequence spans 253 residues: AA9 family lytic polysaccharide monooxygenase F (253 aa).

Residues 1 to 16 (MKVLATLLASVGLVAA) form the signal peptide. Histidine 17 contributes to the Cu(2+) binding site. An N-linked (GlcNAc...) asparagine glycan is attached at asparagine 22. 2 disulfides stabilise this stretch: cysteine 75-cysteine 193 and cysteine 163-cysteine 253. Histidine 105 contributes to the Cu(2+) binding site. Residue asparagine 143 is glycosylated (N-linked (GlcNAc...) asparagine). O2 is bound by residues histidine 179 and glutamine 188. Residue tyrosine 190 participates in Cu(2+) binding.

The protein belongs to the polysaccharide monooxygenase AA9 family. The cofactor is Cu(2+).

The protein resides in the secreted. It carries out the reaction [(1-&gt;4)-beta-D-glucosyl]n+m + reduced acceptor + O2 = 4-dehydro-beta-D-glucosyl-[(1-&gt;4)-beta-D-glucosyl]n-1 + [(1-&gt;4)-beta-D-glucosyl]m + acceptor + H2O.. In terms of biological role, lytic polysaccharide monooxygenase (LPMO) that depolymerizes crystalline and amorphous polysaccharides via the oxidation of scissile alpha- or beta-(1-4)-glycosidic bonds, yielding C1 or C4 oxidation products. Catalysis by LPMOs requires the reduction of the active-site copper from Cu(II) to Cu(I) by a reducing agent and H(2)O(2) or O(2) as a cosubstrate. The protein is AA9 family lytic polysaccharide monooxygenase F of Podospora anserina (strain S / ATCC MYA-4624 / DSM 980 / FGSC 10383) (Pleurage anserina).